Reading from the N-terminus, the 220-residue chain is Ribose-5-phosphate isomerase A (220 aa).

Residues 28–31, 81–84, and 94–97 contribute to the substrate site; these read TGST, DGAD, and KGGG. Residue E103 is the Proton acceptor of the active site. K121 lines the substrate pocket.

The protein belongs to the ribose 5-phosphate isomerase family. Homodimer.

It catalyses the reaction aldehydo-D-ribose 5-phosphate = D-ribulose 5-phosphate. The protein operates within carbohydrate degradation; pentose phosphate pathway; D-ribose 5-phosphate from D-ribulose 5-phosphate (non-oxidative stage): step 1/1. In terms of biological role, catalyzes the reversible conversion of ribose-5-phosphate to ribulose 5-phosphate. This chain is Ribose-5-phosphate isomerase A, found in Shewanella baltica (strain OS223).